Consider the following 484-residue polypeptide: mRNA decay activator protein ZFP36L2 (484 aa).

S57 and S127 each carry phosphoserine. The tract at residues Y100–N152 is disordered. A compositionally biased stretch (basic and acidic residues) spans K117–Q134. The RNA-binding signature appears at R155–L160. 2 C3H1-type zinc fingers span residues R155–H183 and K193–D221. The segment at Y172–R213 is RNA-binding. 2 disordered regions span residues S261–S304 and Q395–D484. Residues P401–P418 are compositionally biased toward pro residues. Positions Y449–D468 are enriched in low complexity. Residues S480 and S482 each carry the phosphoserine; by RPS6KA1 modification.

As to quaternary structure, associates with the cytoplasmic CCR4-NOT deadenylase to trigger ARE-containing mRNA deadenylation and decay processes. Interacts with CNOT7; this interaction is inhibited in response to phorbol 12-myristate 13-acetate (PMA) treatment in a p38 MAPK-dependent manner. Interacts with CNOT6L. In terms of processing, phosphorylated by RPS6KA1 at Ser-480 and Ser-482 upon phorbol 12-myristate 13-acetate (PMA) treatment; this phosphorylation results in dissociation of the CCR4-NOT-deadenylase complex and induces p38 MAPK-mediated stabilization of the low-density lipoprotein (LDL) receptor (LDLR) mRNA. Phosphorylation occurs during early preadipocyte differentiation. As to expression, expressed in preadipocytes and adipocytes (at protein level). Expressed at highest level in lymphoid tissues such as thymus, spleen, lung, uterus, ovary, small and large intestine, mammary gland, fat and bone marrow. Expressed at intermediate level in kidney, heart, adrenal, eye and fetal liver. Weakly expressed in brain, skeletal muscle and liver. Expressed through B lymphocyte development. Expressed in superior cervical ganglion (SCG) and dorsal root ganglion (DRG). Expressed in embryonic stem cells (ESCs). Expressed in oocytes.

It is found in the nucleus. It localises to the cytoplasm. Functionally, zinc-finger RNA-binding protein that destabilizes several cytoplasmic AU-rich element (ARE)-containing mRNA transcripts by promoting their poly(A) tail removal or deadenylation, and hence provide a mechanism for attenuating protein synthesis. Acts as a 3'-untranslated region (UTR) ARE mRNA-binding adapter protein to communicate signaling events to the mRNA decay machinery. Functions by recruiting the CCR4-NOT deadenylase complex and probably other components of the cytoplasmic RNA decay machinery to the bound ARE-containing mRNAs, and hence promotes ARE-mediated mRNA deadenylation and decay processes. Binds to 3'-UTR ARE of numerous mRNAs. Promotes ARE-containing mRNA decay of the low-density lipoprotein (LDL) receptor (LDLR) mRNA in response to phorbol 12-myristate 13-acetate (PMA) treatment in a p38 MAPK-dependent manner. Positively regulates early adipogenesis by promoting ARE-mediated mRNA decay of immediate early genes (IEGs). Plays a role in mature peripheral neuron integrity by promoting ARE-containing mRNA decay of the transcriptional repressor REST mRNA. Plays a role in ovulation and oocyte meiotic maturation by promoting ARE-mediated mRNA decay of the luteinizing hormone receptor LHCGR mRNA. Acts as a negative regulator of erythroid cell differentiation: promotes glucocorticoid-induced self-renewal of erythroid cells by binding mRNAs that are induced or highly expressed during terminal erythroid differentiation and promotes their degradation, preventing erythroid cell differentiation. In association with ZFP36L1 maintains quiescence on developing B lymphocytes by promoting ARE-mediated decay of several mRNAs encoding cell cycle regulators that help B cells progress through the cell cycle, and hence ensuring accurate variable-diversity-joining (VDJ) recombination process and functional immune cell formation. Together with ZFP36L1 is also necessary for thymocyte development and prevention of T-cell acute lymphoblastic leukemia (T-ALL) transformation by promoting ARE-mediated mRNA decay of the oncogenic transcription factor NOTCH1 mRNA. In Mus musculus (Mouse), this protein is mRNA decay activator protein ZFP36L2.